The following is a 498-amino-acid chain: Lysine--tRNA ligase (498 aa).

Residues glutamate 407 and glutamate 414 each contribute to the Mg(2+) site.

It belongs to the class-II aminoacyl-tRNA synthetase family. Homodimer. Mg(2+) is required as a cofactor.

The protein resides in the cytoplasm. It catalyses the reaction tRNA(Lys) + L-lysine + ATP = L-lysyl-tRNA(Lys) + AMP + diphosphate. In Sinorhizobium medicae (strain WSM419) (Ensifer medicae), this protein is Lysine--tRNA ligase.